Reading from the N-terminus, the 508-residue chain is UBX domain-containing protein 4 (508 aa).

The interaction with UBQLN1 stretch occupies residues 1-200; the sequence is MLWFQGAIPA…PAEDLNIRVE (200 aa). The Cytoplasmic portion of the chain corresponds to 1–413; sequence MLWFQGAIPA…VHSSSGDIWT (413 aa). Composition is skewed to polar residues over residues 117 to 151 and 160 to 187; these read SETS…QSRN and TSDT…SGCS. Positions 117-196 are disordered; it reads SETSVANGSQ…SDQRPAEDLN (80 aa). The UBX domain occupies 315 to 393; it reads ERSTVARIQF…ELAPSASVVV (79 aa). An intramembrane segment occupies 414-434; sequence LLGTVLYPFLAIWRLISNFLF. The Cytoplasmic portion of the chain corresponds to 435 to 508; sequence SNPPPTQTSV…TWNGNSTQQM (74 aa). The disordered stretch occupies residues 440 to 508; the sequence is TQTSVRVTSS…TWNGNSTQQM (69 aa). Positions 441–458 are enriched in polar residues; sequence QTSVRVTSSEPPNPASSS. Residues 459–491 are compositionally biased toward basic and acidic residues; the sequence is KSEKREPVRKRVLEKRGDDFKKEGKIYRLRTQD. A Phosphothreonine modification is found at Thr-489. The span at 498–508 shows a compositional bias: polar residues; that stretch reads NTWNGNSTQQM.

In terms of assembly, directly interacts with VCP. Interacts with UBQLN1. Forms a complex with VCP and UBQLN1.

It localises to the endoplasmic reticulum membrane. Its subcellular location is the nucleus envelope. In terms of biological role, involved in endoplasmic reticulum-associated protein degradation (ERAD). Acts as a platform to recruit both UBQLN1 and VCP to the ER during ERAD. This is UBX domain-containing protein 4 (UBXN4) from Pongo abelii (Sumatran orangutan).